A 154-amino-acid chain; its full sequence is Endoribonuclease YbeY (154 aa).

Zn(2+) contacts are provided by His113, His117, and His123.

This sequence belongs to the endoribonuclease YbeY family. Zn(2+) is required as a cofactor.

The protein resides in the cytoplasm. Single strand-specific metallo-endoribonuclease involved in late-stage 70S ribosome quality control and in maturation of the 3' terminus of the 16S rRNA. This is Endoribonuclease YbeY from Vibrio vulnificus (strain CMCP6).